Here is a 351-residue protein sequence, read N- to C-terminus: Ribosomal RNA small subunit methyltransferase H (351 aa).

S-adenosyl-L-methionine contacts are provided by residues 48–50 (GGY), Asp-67, Phe-94, Asp-115, and Gln-122. A disordered region spans residues 274–351 (AAQASRHVPG…PAPQGRGPRR (78 aa)).

Belongs to the methyltransferase superfamily. RsmH family.

The protein resides in the cytoplasm. The enzyme catalyses cytidine(1402) in 16S rRNA + S-adenosyl-L-methionine = N(4)-methylcytidine(1402) in 16S rRNA + S-adenosyl-L-homocysteine + H(+). Its function is as follows. Specifically methylates the N4 position of cytidine in position 1402 (C1402) of 16S rRNA. The sequence is that of Ribosomal RNA small subunit methyltransferase H from Methylorubrum extorquens (strain ATCC 14718 / DSM 1338 / JCM 2805 / NCIMB 9133 / AM1) (Methylobacterium extorquens).